A 273-amino-acid polypeptide reads, in one-letter code: Formamidopyrimidine-DNA glycosylase (273 aa).

P2 acts as the Schiff-base intermediate with DNA in catalysis. E3 acts as the Proton donor in catalysis. K58 functions as the Proton donor; for beta-elimination activity in the catalytic mechanism. DNA contacts are provided by H91, R110, and R153. The FPG-type zinc-finger motif lies at 238 to 272 (KVYGKEGQPCPRCGEDFVKIKICGRGTTYCLHCQK). Residue R262 is the Proton donor; for delta-elimination activity of the active site.

This sequence belongs to the FPG family. In terms of assembly, monomer. Requires Zn(2+) as cofactor.

It catalyses the reaction Hydrolysis of DNA containing ring-opened 7-methylguanine residues, releasing 2,6-diamino-4-hydroxy-5-(N-methyl)formamidopyrimidine.. It carries out the reaction 2'-deoxyribonucleotide-(2'-deoxyribose 5'-phosphate)-2'-deoxyribonucleotide-DNA = a 3'-end 2'-deoxyribonucleotide-(2,3-dehydro-2,3-deoxyribose 5'-phosphate)-DNA + a 5'-end 5'-phospho-2'-deoxyribonucleoside-DNA + H(+). Involved in base excision repair of DNA damaged by oxidation or by mutagenic agents. Acts as a DNA glycosylase that recognizes and removes damaged bases. Has a preference for oxidized purines, such as 7,8-dihydro-8-oxoguanine (8-oxoG). Has AP (apurinic/apyrimidinic) lyase activity and introduces nicks in the DNA strand. Cleaves the DNA backbone by beta-delta elimination to generate a single-strand break at the site of the removed base with both 3'- and 5'-phosphates. In Lactobacillus delbrueckii subsp. bulgaricus (strain ATCC BAA-365 / Lb-18), this protein is Formamidopyrimidine-DNA glycosylase.